The following is a 267-amino-acid chain: Small ribosomal subunit protein uS2 (267 aa).

A disordered region spans residues 234–267 (DNAEEELAEAISQEEPSAAEELPDDMADNENEFE). A compositionally biased stretch (acidic residues) spans 250–267 (SAAEELPDDMADNENEFE).

This sequence belongs to the universal ribosomal protein uS2 family.

The polypeptide is Small ribosomal subunit protein uS2 (Dichelobacter nodosus (strain VCS1703A)).